The chain runs to 233 residues: DNA-directed RNA polymerase I subunit RPA34 (233 aa).

4 positions are modified to phosphoserine: Ser-10, Ser-12, Ser-14, and Ser-60. The span at 179-191 (DFHVAEEVKENKK) shows a compositional bias: basic and acidic residues. Residues 179–233 (DFHVAEEVKENKKEPKKRSHHDDEEESSEKKKKKKEKREKREKKDKKDKKKKHRD) are disordered. Residues 208-233 (KKKKKKEKREKREKKDKKDKKKKHRD) show a composition bias toward basic residues.

It belongs to the eukaryotic RPA34 RNA polymerase subunit family. In terms of assembly, component of the RNA polymerase I (Pol I) complex consisting of 14 subunits: RPA135, RPA190, RPC40, RPA14, RPB5, RPO26, RPA43, RPB8, RPA12, RPB10, RPC19, RPC10, RPA49 and RPA34. The complex is composed of a horseshoe-shaped core containing ten subunits (RPA135, RPA190, RPB5, RPO26, RPB8, RPB10, RPC10, RPA12, RPC19 and RPC40) where RPA135 and RPA190 form the DNA-binding cleft. Outside of the core, RPA14 and RPA43 form the stalk that mediates interactions with transcription initiation factors and newly synthesized RNA. Forms a TFIIF-like heterodimer with RPA49; the heterodimer formed by RPA34 and RPA49 can be dissociated from the Pol I core giving rise to a 12 subunit form A* of Pol I (formerly called pol A) that shows impaired transcript elongation activity and increased sensitivity to alpha-amanitin. The heterodimer formed by RPA34 and RPA49 stabilizes subunit RPA12 and stimulates RPA12-dependent RNA cleavage.

It localises to the nucleus. The protein resides in the nucleolus. DNA-dependent RNA polymerases catalyze the transcription of DNA into RNA using the four ribonucleoside triphosphates as substrates. Component of RNA polymerase I (Pol I) which synthesizes ribosomal RNA precursors. Besides, RNA polymerase I has intrinsic RNA cleavage activity. The heterodimer formed by RPA34 and RPA49 stimulates transcript elongation by Pol I. The chain is DNA-directed RNA polymerase I subunit RPA34 (RPA34) from Saccharomyces cerevisiae (strain ATCC 204508 / S288c) (Baker's yeast).